Here is a 435-residue protein sequence, read N- to C-terminus: E3 ubiquitin-protein ligase itt1 (435 aa).

The RWD domain occupies 16–135 (DELIALQSIY…EHVRSIATIA (120 aa)). The tract at residues 170 to 420 (RKFQCNVCFD…DPVSSCYGML (251 aa)) is TRIAD supradomain. Residues C174, C177, C192, H194, C197, C200, C219, C224, C266, C271, C286, C289, C294, C297, H302, C308, C368, and C371 each contribute to the Zn(2+) site. The segment at 174 to 224 (CNVCFDEFNGTDCFQLTRCGHVSCQSCLRDYYTMCIQEGMFSQIKCIDLDC) adopts an RING-type 1 zinc-finger fold. The segment at 245 to 308 (TNRYKELEEK…ATWHGDLSPC (64 aa)) adopts an IBR-type zinc-finger fold. The RING-type 2; atypical zinc-finger motif lies at 368-396 (CPTCDRVVERIDGCCHMNCLCGTHFCFLC). C381 is an active-site residue. C386, C388, C393, C396, H408, and C416 together coordinate Zn(2+).

It belongs to the RBR family. RNF14 subfamily.

It is found in the cytoplasm. The protein localises to the nucleus. The catalysed reaction is [E2 ubiquitin-conjugating enzyme]-S-ubiquitinyl-L-cysteine + [acceptor protein]-L-lysine = [E2 ubiquitin-conjugating enzyme]-L-cysteine + [acceptor protein]-N(6)-ubiquitinyl-L-lysine.. It functions in the pathway protein modification; protein ubiquitination. In terms of biological role, E3 ubiquitin-protein ligase involved in the rescue of stalled ribosomes by promoting ubiquitination and degradation of proteins on stalled ribosomes. Specifically required to resolve RNA-protein cross-links caused by reactive aldehydes, which trigger translation stress by stalling ribosomes: acts by catalying 'Lys-6'-linked ubiquitination of RNA-protein cross-links, leading to their degradation. This Schizosaccharomyces pombe (strain 972 / ATCC 24843) (Fission yeast) protein is E3 ubiquitin-protein ligase itt1 (itt1).